The primary structure comprises 55 residues: uncharacterized protein (55 aa).

A coiled-coil region spans residues 17–44 (QNVNIALTKKRLDTAQQNADQTLKMIQH).

This is an uncharacterized protein from Bacillus subtilis (strain 168).